Here is a 300-residue protein sequence, read N- to C-terminus: UPF0282 protein TON_1363 (300 aa).

This sequence belongs to the UPF0282 family.

This Thermococcus onnurineus (strain NA1) protein is UPF0282 protein TON_1363.